We begin with the raw amino-acid sequence, 483 residues long: Regulatory protein ViaA (483 aa).

Belongs to the ViaA family. Homodimer. Interacts with RavA.

Its subcellular location is the cytoplasm. In terms of biological role, component of the RavA-ViaA chaperone complex, which may act on the membrane to optimize the function of some of the respiratory chains. ViaA stimulates the ATPase activity of RavA. This is Regulatory protein ViaA from Salmonella schwarzengrund (strain CVM19633).